The chain runs to 324 residues: Acetyl-coenzyme A carboxylase carboxyl transferase subunit alpha (324 aa).

The CoA carboxyltransferase C-terminal domain occupies 41 to 291; the sequence is RLDRLKEKIY…QEYVLQEWLK (251 aa).

Belongs to the AccA family. Acetyl-CoA carboxylase is a heterohexamer composed of biotin carboxyl carrier protein (AccB), biotin carboxylase (AccC) and two subunits each of ACCase subunit alpha (AccA) and ACCase subunit beta (AccD).

It is found in the cytoplasm. It carries out the reaction N(6)-carboxybiotinyl-L-lysyl-[protein] + acetyl-CoA = N(6)-biotinyl-L-lysyl-[protein] + malonyl-CoA. Its pathway is lipid metabolism; malonyl-CoA biosynthesis; malonyl-CoA from acetyl-CoA: step 1/1. In terms of biological role, component of the acetyl coenzyme A carboxylase (ACC) complex. First, biotin carboxylase catalyzes the carboxylation of biotin on its carrier protein (BCCP) and then the CO(2) group is transferred by the carboxyltransferase to acetyl-CoA to form malonyl-CoA. This Chlamydia muridarum (strain MoPn / Nigg) protein is Acetyl-coenzyme A carboxylase carboxyl transferase subunit alpha.